Reading from the N-terminus, the 149-residue chain is 3-dehydroquinate dehydratase (149 aa).

The Proton acceptor role is filled by Y26. 3 residues coordinate substrate: N77, H83, and D90. H103 functions as the Proton donor in the catalytic mechanism. Residues 104–105 (LS) and R114 each bind substrate.

It belongs to the type-II 3-dehydroquinase family. In terms of assembly, homododecamer.

It carries out the reaction 3-dehydroquinate = 3-dehydroshikimate + H2O. The protein operates within metabolic intermediate biosynthesis; chorismate biosynthesis; chorismate from D-erythrose 4-phosphate and phosphoenolpyruvate: step 3/7. Its function is as follows. Catalyzes a trans-dehydration via an enolate intermediate. The sequence is that of 3-dehydroquinate dehydratase from Haemophilus influenzae (strain 86-028NP).